Here is a 278-residue protein sequence, read N- to C-terminus: 2-(acetamidomethylene)succinate hydrolase (278 aa).

Residues isoleucine 41 and 106 to 107 (SL) contribute to the chloride site. Serine 106 serves as the catalytic Nucleophile. Catalysis depends on residues aspartate 130 and histidine 258.

It belongs to the AB hydrolase superfamily. In terms of assembly, homodimer.

The catalysed reaction is 2-(acetamidomethylene)succinate + 2 H2O + H(+) = succinate semialdehyde + acetate + NH4(+) + CO2. Its pathway is cofactor degradation; B6 vitamer degradation. Its function is as follows. Catalyzes the final reaction in the degradation of vitamin B6 from (E)-2-(acetamidomethylene)succinate (E-2AMS) to produce succinic semialdehyde, acetate, ammonia and carbon dioxide. This Mesorhizobium japonicum (strain LMG 29417 / CECT 9101 / MAFF 303099) (Mesorhizobium loti (strain MAFF 303099)) protein is 2-(acetamidomethylene)succinate hydrolase.